The primary structure comprises 500 residues: POU domain, class 3, transcription factor 3 (500 aa).

Residues 32 to 52 (GGGGGGGGGGGGAGGGGGGMQ) show a composition bias toward gly residues. 4 disordered regions span residues 32 to 63 (GGGG…SGAY), 122 to 190 (WSGS…WGAA), 231 to 319 (NGML…TPTS), and 461 to 500 (EKRM…TSVQ). Composition is skewed to pro residues over residues 134-146 (QQPP…PPQG) and 171-181 (HLGPPPPPPHQ). The span at 241-251 (GGGGGGAGGGA) shows a compositional bias: gly residues. Basic residues predominate over residues 270 to 287 (HHHHHHHHAHPHPPHPHH). Residues 293-303 (HHGGGGGGAGP) are compositionally biased toward gly residues. In terms of domain architecture, POU-specific spans 314–388 (EDTPTSDDLE…LLNKWLEEAD (75 aa)). A DNA-binding region (homeobox) is located at residues 406-465 (KRKKRTSIEVSVKGALESHFLKCPKPSAQEITNLADSLQLEKEVVRVWFCNRRQKEKRMT). Over residues 468–486 (GIQQQTPDDVYSQVGTVSA) the composition is skewed to polar residues.

The protein belongs to the POU transcription factor family. Class-3 subfamily. Homodimer. Brain.

It is found in the nucleus. Functionally, transcription factor that acts synergistically with SOX11 and SOX4. Plays a role in neuronal development. Is implicated in an enhancer activity at the embryonic met-mesencephalic junction; the enhancer element contains the octamer motif (5'-ATTTGCAT-3'). The polypeptide is POU domain, class 3, transcription factor 3 (Homo sapiens (Human)).